The following is a 72-amino-acid chain: Translation initiation factor IF-1 (72 aa).

The 72-residue stretch at methionine 1–lysine 72 folds into the S1-like domain.

The protein belongs to the IF-1 family. In terms of assembly, component of the 30S ribosomal translation pre-initiation complex which assembles on the 30S ribosome in the order IF-2 and IF-3, IF-1 and N-formylmethionyl-tRNA(fMet); mRNA recruitment can occur at any time during PIC assembly.

Its subcellular location is the cytoplasm. Functionally, one of the essential components for the initiation of protein synthesis. Stabilizes the binding of IF-2 and IF-3 on the 30S subunit to which N-formylmethionyl-tRNA(fMet) subsequently binds. Helps modulate mRNA selection, yielding the 30S pre-initiation complex (PIC). Upon addition of the 50S ribosomal subunit IF-1, IF-2 and IF-3 are released leaving the mature 70S translation initiation complex. In Myxococcus xanthus (strain DK1622), this protein is Translation initiation factor IF-1.